A 133-amino-acid polypeptide reads, in one-letter code: Inhibitor of g-type lysozyme (133 aa).

A signal peptide spans 1–22 (MKIKSIRKAVLLLALLTSTSFA).

It is found in the periplasm. Functionally, inhibits activity of g-type lysozyme, which confers increased lysozyme tolerance to the bacterium. The protein is Inhibitor of g-type lysozyme (pliG) of Escherichia coli (strain K12).